The chain runs to 213 residues: Pyridoxine/pyridoxamine 5'-phosphate oxidase (213 aa).

Substrate-binding positions include 8–11 and K66; that span reads RREY. Residues 61–66, 76–77, R82, K83, and Q105 each bind FMN; these read RIVLLK and YT. 3 residues coordinate substrate: Y123, R127, and S131. Residues 140–141 and W185 contribute to the FMN site; that span reads QS. 191–193 contributes to the substrate binding site; that stretch reads RLH. Residue R195 coordinates FMN.

Belongs to the pyridoxamine 5'-phosphate oxidase family. Homodimer. It depends on FMN as a cofactor.

The catalysed reaction is pyridoxamine 5'-phosphate + O2 + H2O = pyridoxal 5'-phosphate + H2O2 + NH4(+). The enzyme catalyses pyridoxine 5'-phosphate + O2 = pyridoxal 5'-phosphate + H2O2. It functions in the pathway cofactor metabolism; pyridoxal 5'-phosphate salvage; pyridoxal 5'-phosphate from pyridoxamine 5'-phosphate: step 1/1. It participates in cofactor metabolism; pyridoxal 5'-phosphate salvage; pyridoxal 5'-phosphate from pyridoxine 5'-phosphate: step 1/1. Its function is as follows. Catalyzes the oxidation of either pyridoxine 5'-phosphate (PNP) or pyridoxamine 5'-phosphate (PMP) into pyridoxal 5'-phosphate (PLP). The sequence is that of Pyridoxine/pyridoxamine 5'-phosphate oxidase from Pseudoalteromonas atlantica (strain T6c / ATCC BAA-1087).